We begin with the raw amino-acid sequence, 209 residues long: PRA1 family protein A1 (209 aa).

4 helical membrane-spanning segments follow: residues 51–73, 77–99, 144–164, and 166–186; these read LYYYRTNYFIMIVVILGLGVLTR, IFAALLTALSLAFLNDSFAGSFS, VFVLTCSLVSFALWYISSGLL, and VSVALLIAHLATILHASLRTP.

This sequence belongs to the PRA1 family.

It localises to the endoplasmic reticulum membrane. Its function is as follows. May be involved in both secretory and endocytic intracellular trafficking in the endosomal/prevacuolar compartments. The sequence is that of PRA1 family protein A1 (PRA1A1) from Arabidopsis thaliana (Mouse-ear cress).